The following is a 300-amino-acid chain: 4-hydroxy-tetrahydrodipicolinate synthase (300 aa).

Residue Thr-45 coordinates pyruvate. Tyr-140 (proton donor/acceptor) is an active-site residue. Lys-169 serves as the catalytic Schiff-base intermediate with substrate. Ile-210 contributes to the pyruvate binding site.

The protein belongs to the DapA family. Homotetramer; dimer of dimers.

It localises to the cytoplasm. It catalyses the reaction L-aspartate 4-semialdehyde + pyruvate = (2S,4S)-4-hydroxy-2,3,4,5-tetrahydrodipicolinate + H2O + H(+). Its pathway is amino-acid biosynthesis; L-lysine biosynthesis via DAP pathway; (S)-tetrahydrodipicolinate from L-aspartate: step 3/4. Functionally, catalyzes the condensation of (S)-aspartate-beta-semialdehyde [(S)-ASA] and pyruvate to 4-hydroxy-tetrahydrodipicolinate (HTPA). The sequence is that of 4-hydroxy-tetrahydrodipicolinate synthase from Helicobacter pylori (strain P12).